A 198-amino-acid chain; its full sequence is Protein GrpE (198 aa).

Basic and acidic residues predominate over residues 1-18 (MSEQEQKVEIPEVEKQEE). Residues 1 to 33 (MSEQEQKVEIPEVEKQEEVVVEETQQAEHSQEF) form a disordered region.

It belongs to the GrpE family. In terms of assembly, homodimer.

It is found in the cytoplasm. Participates actively in the response to hyperosmotic and heat shock by preventing the aggregation of stress-denatured proteins, in association with DnaK and GrpE. It is the nucleotide exchange factor for DnaK and may function as a thermosensor. Unfolded proteins bind initially to DnaJ; upon interaction with the DnaJ-bound protein, DnaK hydrolyzes its bound ATP, resulting in the formation of a stable complex. GrpE releases ADP from DnaK; ATP binding to DnaK triggers the release of the substrate protein, thus completing the reaction cycle. Several rounds of ATP-dependent interactions between DnaJ, DnaK and GrpE are required for fully efficient folding. The polypeptide is Protein GrpE (Haemophilus influenzae (strain ATCC 51907 / DSM 11121 / KW20 / Rd)).